Consider the following 195-residue polypeptide: Keratin-associated protein 4-11 (195 aa).

27 consecutive repeat copies span residues 5 to 9 (CCGSV), 24 to 28 (CCRPS), 29 to 33 (CCETT), 34 to 38 (CCRTT), 44 to 48 (CCVSS), 49 to 53 (CCRPQ), 54 to 58 (CCQSV), 59 to 63 (CCQPT), 64 to 68 (CCRPR), 69 to 73 (CCISS), 74 to 78 (CCRPS), 79 to 83 (CCVSS), 84 to 88 (CCKPQ), 89 to 93 (CCQSM), 94 to 98 (CCQPT), 99 to 103 (CCRPR), 104 to 108 (CCISS), 109 to 113 (CCRPS), 114 to 118 (CCVSS), 119 to 123 (CCRPQ), 124 to 128 (CCQSV), 129 to 133 (CCQPT), 134 to 138 (CCHPS), 144 to 148 (CCRPS), 149 to 153 (CCESS), 154 to 158 (CCRPC), and 159 to 163 (CCLRP). Positions 5 to 163 (CCGSVCSHQG…CCRPCCCLRP (159 aa)) are 27 X 5 AA repeats of C-C-[GIKRQVHEL]-[SPTR]-[STVQRMC].

This sequence belongs to the KRTAP type 4 family. As to quaternary structure, interacts with hair keratins. As to expression, expressed in the hair follicles.

Functionally, in the hair cortex, hair keratin intermediate filaments are embedded in an interfilamentous matrix, consisting of hair keratin-associated proteins (KRTAP), which are essential for the formation of a rigid and resistant hair shaft through their extensive disulfide bond cross-linking with abundant cysteine residues of hair keratins. The matrix proteins include the high-sulfur and high-glycine-tyrosine keratins. In Homo sapiens (Human), this protein is Keratin-associated protein 4-11 (KRTAP4-11).